Reading from the N-terminus, the 302-residue chain is Phosphoribosylaminoimidazole-succinocarboxamide synthase (302 aa).

It belongs to the SAICAR synthetase family.

It catalyses the reaction 5-amino-1-(5-phospho-D-ribosyl)imidazole-4-carboxylate + L-aspartate + ATP = (2S)-2-[5-amino-1-(5-phospho-beta-D-ribosyl)imidazole-4-carboxamido]succinate + ADP + phosphate + 2 H(+). Its pathway is purine metabolism; IMP biosynthesis via de novo pathway; 5-amino-1-(5-phospho-D-ribosyl)imidazole-4-carboxamide from 5-amino-1-(5-phospho-D-ribosyl)imidazole-4-carboxylate: step 1/2. The polypeptide is Phosphoribosylaminoimidazole-succinocarboxamide synthase (Cupriavidus pinatubonensis (strain JMP 134 / LMG 1197) (Cupriavidus necator (strain JMP 134))).